The sequence spans 474 residues: Methylenetetrahydrofolate--tRNA-(uracil-5-)-methyltransferase TrmFO (474 aa).

9-14 contacts FAD; that stretch reads GGGLAG.

This sequence belongs to the MnmG family. TrmFO subfamily. FAD is required as a cofactor.

The protein localises to the cytoplasm. It catalyses the reaction uridine(54) in tRNA + (6R)-5,10-methylene-5,6,7,8-tetrahydrofolate + NADH + H(+) = 5-methyluridine(54) in tRNA + (6S)-5,6,7,8-tetrahydrofolate + NAD(+). The enzyme catalyses uridine(54) in tRNA + (6R)-5,10-methylene-5,6,7,8-tetrahydrofolate + NADPH + H(+) = 5-methyluridine(54) in tRNA + (6S)-5,6,7,8-tetrahydrofolate + NADP(+). Functionally, catalyzes the folate-dependent formation of 5-methyl-uridine at position 54 (M-5-U54) in all tRNAs. This chain is Methylenetetrahydrofolate--tRNA-(uracil-5-)-methyltransferase TrmFO, found in Methylorubrum extorquens (strain PA1) (Methylobacterium extorquens).